The sequence spans 2193 residues: Non-reducing polyketide synthase esdpA (2193 aa).

The region spanning Asn-90–His-252 is the Starter acyltransferase (SAT) domain. The 417-residue stretch at Asp-381–Glu-797 folds into the Ketosynthase family 3 (KS3) domain. Catalysis depends on for beta-ketoacyl synthase activity residues Cys-546, His-682, and His-720. A Malonyl-CoA:ACP transacylase (MAT) domain is found at Val-906–Lys-1158. Ser-992 functions as the For acyl/malonyl transferase activity in the catalytic mechanism. The segment at Pro-1265–Arg-1392 is N-terminal hotdog fold. In terms of domain architecture, PKS/mFAS DH spans Pro-1265–Gln-1569. Positions Val-1419–Gln-1569 are C-terminal hotdog fold. Asp-1479 acts as the Proton donor; for dehydratase activity in catalysis. A Carrier domain is found at Arg-1723–Pro-1799. The residue at position 1759 (Ser-1759) is an O-(pantetheine 4'-phosphoryl)serine. The segment at Tyr-1944–Asp-2177 is methyltransferase (CMeT) domain.

Pantetheine 4'-phosphate is required as a cofactor.

It participates in secondary metabolite biosynthesis; terpenoid biosynthesis. In terms of biological role, non-reducing polyketide synthase; part of the cluster that mediates the biosynthesis of shearones, diterpenoid pyrones (DPs) which are structurally diverse meroterpenoids consisting of a diterpene linked by a pyrone, and which may exhibit a range of bioactivities. Whitin the pathway, esdpA takes part to the biosynthesis of the molecular scaffold via the production of the alpha-pyrone from one molecule of acetyl-CoA, two molecules of malonyl-CoA and one molecule of S-adenosyl-L-methionine (SAM). The molecular scaffold is commonly biosynthesized by a series of enzymes including the non-reducing polyketide synthase (NR-PKS) esdpA that generates an alpha-pyrone; the prenyltransferase esdpC that attaches a geranylgeranyl pyrophosphate (GGPP) produced by the GGPP synthase (GGPPS) esdpD onto the pyrone unit; the FAD-dependent monooxygenase esdpE that converts an olefin on the diterpene unit into an epoxide; and the terpene cyclase esdpB that catalyzes the cyclization reactions to give the molecular backbone shearone A. In the modification steps, esdpF oxidizes the hydroxy group to a ketone at C-3 and esdpG then attaches hydroxy groups at both C-11 and C-12. After that, esdpI hydroxylates at C-20 and esdpH hydroxylates at C-6'. The ether bridge is generated by nucleophilic attack of the hydroxy group at C-20 to the carbonyl carbon at C-3. EsdpH can also functions prior to esdpI. The different combinations of these modification enzymes lead to the production of diverse shearone derivatives, shearone I being the end product of the pathway. The alpha-ketoglutarate-dependent dioxygenase esdpJ seems not to be involved in this pathway. In Penicillium shearii (Eupenicillium shearii), this protein is Non-reducing polyketide synthase esdpA.